The primary structure comprises 231 residues: uncharacterized protein (231 aa).

The next 5 helical transmembrane spans lie at 36 to 56 (SLLA…SFFI), 58 to 78 (SQVT…ALQW), 83 to 103 (APLN…TLTP), 143 to 163 (FTVM…ASLL), and 170 to 190 (SIVN…YILY).

This sequence belongs to the BI1 family.

The protein resides in the cell membrane. This is an uncharacterized protein from Campylobacter jejuni subsp. jejuni serotype O:2 (strain ATCC 700819 / NCTC 11168).